The sequence spans 308 residues: F420-non-reducing hydrogenase subunit G (308 aa).

This sequence belongs to the [NiFe]/[NiFeSe] hydrogenase small subunit family. The F420-non-reducing hydrogenase is composed of three subunits; MvhA, MvhD and MvhG. It forms a complex with the heterodisulfide reductase (hdr).

In terms of biological role, part of a complex that provides reducing equivalents for heterodisulfide reductase. The chain is F420-non-reducing hydrogenase subunit G (mvhG) from Methanothermobacter marburgensis (strain ATCC BAA-927 / DSM 2133 / JCM 14651 / NBRC 100331 / OCM 82 / Marburg) (Methanobacterium thermoautotrophicum).